Reading from the N-terminus, the 404-residue chain is Argininosuccinate synthase (404 aa).

9–17 (AYSGGLDTS) serves as a coordination point for ATP. Tyr-86 provides a ligand contact to L-citrulline. Position 116 (Gly-116) interacts with ATP. Thr-118, Asn-122, and Asp-123 together coordinate L-aspartate. Asn-122 provides a ligand contact to L-citrulline. Residues Arg-126, Ser-174, Ser-183, Glu-259, and Tyr-271 each contribute to the L-citrulline site.

Belongs to the argininosuccinate synthase family. Type 1 subfamily. In terms of assembly, homotetramer.

The protein resides in the cytoplasm. The catalysed reaction is L-citrulline + L-aspartate + ATP = 2-(N(omega)-L-arginino)succinate + AMP + diphosphate + H(+). Its pathway is amino-acid biosynthesis; L-arginine biosynthesis; L-arginine from L-ornithine and carbamoyl phosphate: step 2/3. This chain is Argininosuccinate synthase, found in Listeria monocytogenes serotype 4b (strain CLIP80459).